The primary structure comprises 243 residues: 7-cyano-7-deazaguanine synthase (243 aa).

Phenylalanine 18–leucine 28 lines the ATP pocket. Zn(2+) contacts are provided by cysteine 206, cysteine 221, cysteine 224, and cysteine 227.

It belongs to the QueC family. Zn(2+) is required as a cofactor.

It carries out the reaction 7-carboxy-7-deazaguanine + NH4(+) + ATP = 7-cyano-7-deazaguanine + ADP + phosphate + H2O + H(+). The protein operates within purine metabolism; 7-cyano-7-deazaguanine biosynthesis. Its function is as follows. Catalyzes the ATP-dependent conversion of 7-carboxy-7-deazaguanine (CDG) to 7-cyano-7-deazaguanine (preQ(0)). The sequence is that of 7-cyano-7-deazaguanine synthase from Maricaulis maris (strain MCS10) (Caulobacter maris).